Here is a 230-residue protein sequence, read N- to C-terminus: V-type proton ATPase subunit E (230 aa).

It belongs to the V-ATPase E subunit family. As to quaternary structure, V-ATPase is a heteromultimeric enzyme composed of a peripheral catalytic V1 complex (components A to H) attached to an integral membrane V0 proton pore complex (components: a, c, c', c'' and d).

In terms of biological role, subunit of the peripheral V1 complex of vacuolar ATPase essential for assembly or catalytic function. V-ATPase is responsible for acidifying a variety of intracellular compartments in eukaryotic cells. In Citrus unshiu (Satsuma mandarin), this protein is V-type proton ATPase subunit E (VATE).